Here is a 330-residue protein sequence, read N- to C-terminus: Thiosulfate transporter TsuA (330 aa).

Over M1–I2 the chain is Periplasmic. Residues W3 to R18 traverse the membrane as a helical segment. Residues G19–N36 are Cytoplasmic-facing. Residues Y37–V59 form a helical membrane-spanning segment. The Periplasmic portion of the chain corresponds to G60–N70. Residues L71–L87 traverse the membrane as a helical segment. The Cytoplasmic segment spans residues A88 to G102. A helical membrane pass occupies residues L103–K121. The Periplasmic segment spans residues S122–N162. A helical membrane pass occupies residues P163–G180. At T181–K189 the chain is on the cytoplasmic side. Residues F190 to T211 form a helical membrane-spanning segment. Residues L212–N239 lie on the Periplasmic side of the membrane. A helical transmembrane segment spans residues W240–V258. The Cytoplasmic segment spans residues A259–N269. A helical membrane pass occupies residues P270–T289. The Periplasmic segment spans residues A290–A306. Residues L307–I326 form a helical membrane-spanning segment. Over L327–R330 the chain is Cytoplasmic.

The protein belongs to the TsuA/YedE (TC 9.B.102) family.

It is found in the cell inner membrane. It catalyses the reaction thiosulfate(in) = thiosulfate(out). Its function is as follows. Mediates thiosulfate uptake. In Spirochaeta thermophila (strain ATCC 700085 / DSM 6578 / Z-1203), this protein is Thiosulfate transporter TsuA.